Here is a 175-residue protein sequence, read N- to C-terminus: ATP synthase subunit b (175 aa).

The chain crosses the membrane as a helical span at residues L19 to P39.

It belongs to the ATPase B chain family. As to quaternary structure, F-type ATPases have 2 components, F(1) - the catalytic core - and F(0) - the membrane proton channel. F(1) has five subunits: alpha(3), beta(3), gamma(1), delta(1), epsilon(1). F(0) has three main subunits: a(1), b(2) and c(10-14). The alpha and beta chains form an alternating ring which encloses part of the gamma chain. F(1) is attached to F(0) by a central stalk formed by the gamma and epsilon chains, while a peripheral stalk is formed by the delta and b chains.

The protein resides in the cell membrane. Functionally, f(1)F(0) ATP synthase produces ATP from ADP in the presence of a proton or sodium gradient. F-type ATPases consist of two structural domains, F(1) containing the extramembraneous catalytic core and F(0) containing the membrane proton channel, linked together by a central stalk and a peripheral stalk. During catalysis, ATP synthesis in the catalytic domain of F(1) is coupled via a rotary mechanism of the central stalk subunits to proton translocation. Its function is as follows. Component of the F(0) channel, it forms part of the peripheral stalk, linking F(1) to F(0). The sequence is that of ATP synthase subunit b from Salinispora tropica (strain ATCC BAA-916 / DSM 44818 / JCM 13857 / NBRC 105044 / CNB-440).